The sequence spans 273 residues: Cytoplasmic phosphatidylinositol transfer protein 1 (273 aa).

The segment at 244-273 (QAETNEKIHNTSGGANAAANAKEANDGDID) is disordered.

Belongs to the PtdIns transfer protein family. PI transfer class IIB subfamily.

Phosphatidylinositol transfer proteins mediate the monomeric transport of lipids by shielding a lipid from the aqueous environment and binding the lipid in a hydrophobic cavity. The chain is Cytoplasmic phosphatidylinositol transfer protein 1 (rdgBbeta) from Drosophila melanogaster (Fruit fly).